A 453-amino-acid polypeptide reads, in one-letter code: Bifunctional protein GlmU (453 aa).

The pyrophosphorylase stretch occupies residues 1–225; it reads MNIVILAAGT…EWETLGVNSK (225 aa). Residues 6–9, K20, Q71, 76–77, 98–100, G135, E150, N165, and N223 each bind UDP-N-acetyl-alpha-D-glucosamine; these read LAAG, GT, and YGD. D100 serves as a coordination point for Mg(2+). N223 lines the Mg(2+) pocket. The linker stretch occupies residues 226–246; sequence AQLAELERIHQRNVADALLAD. Positions 247–453 are N-acetyltransferase; it reads GVTLADPARI…GYVRPVKKKS (207 aa). UDP-N-acetyl-alpha-D-glucosamine contacts are provided by R329 and K347. The active-site Proton acceptor is the H359. Positions 362 and 373 each coordinate UDP-N-acetyl-alpha-D-glucosamine. Acetyl-CoA-binding positions include A376, 382–383, S401, and A419; that span reads NY.

The protein in the N-terminal section; belongs to the N-acetylglucosamine-1-phosphate uridyltransferase family. This sequence in the C-terminal section; belongs to the transferase hexapeptide repeat family. In terms of assembly, homotrimer. It depends on Mg(2+) as a cofactor.

Its subcellular location is the cytoplasm. It catalyses the reaction alpha-D-glucosamine 1-phosphate + acetyl-CoA = N-acetyl-alpha-D-glucosamine 1-phosphate + CoA + H(+). The enzyme catalyses N-acetyl-alpha-D-glucosamine 1-phosphate + UTP + H(+) = UDP-N-acetyl-alpha-D-glucosamine + diphosphate. Its pathway is nucleotide-sugar biosynthesis; UDP-N-acetyl-alpha-D-glucosamine biosynthesis; N-acetyl-alpha-D-glucosamine 1-phosphate from alpha-D-glucosamine 6-phosphate (route II): step 2/2. The protein operates within nucleotide-sugar biosynthesis; UDP-N-acetyl-alpha-D-glucosamine biosynthesis; UDP-N-acetyl-alpha-D-glucosamine from N-acetyl-alpha-D-glucosamine 1-phosphate: step 1/1. It functions in the pathway bacterial outer membrane biogenesis; LPS lipid A biosynthesis. Functionally, catalyzes the last two sequential reactions in the de novo biosynthetic pathway for UDP-N-acetylglucosamine (UDP-GlcNAc). The C-terminal domain catalyzes the transfer of acetyl group from acetyl coenzyme A to glucosamine-1-phosphate (GlcN-1-P) to produce N-acetylglucosamine-1-phosphate (GlcNAc-1-P), which is converted into UDP-GlcNAc by the transfer of uridine 5-monophosphate (from uridine 5-triphosphate), a reaction catalyzed by the N-terminal domain. The sequence is that of Bifunctional protein GlmU from Burkholderia multivorans (strain ATCC 17616 / 249).